The primary structure comprises 381 residues: Cyclin-dependent kinase inhibitor CIP1 (381 aa).

Residues 1–11 are compositionally biased toward basic residues; that stretch reads MLLERLHKRLH. The disordered stretch occupies residues 1-30; sequence MLLERLHKRLHAGSSRRSQENKDKNCKPED. Residues 17 to 30 are compositionally biased toward basic and acidic residues; it reads RSQENKDKNCKPED. A phosphothreonine mark is found at Thr65, Thr69, and Thr73.

As to quaternary structure, interact with the CDC28/CLN2 complex. Phosphorylated during S phase in a CDC28-dependent manner. Phosphorylated at Thr-65 and Thr-73 by HOG1 under osmotic stress. The phosphorylations of Thr-65 and Thr-73 are necessary for CIP1-induced growth inhibition.

The protein resides in the cytoplasm. It localises to the nucleus. Acts as an inhibitor of the CDC28/CLN2 cyclin-dependent kinase complex. Stabilizes the CDC28 inhibitor SIC1. Negatively regulates the G1/S phase transition. Contributes to osmostress-induced transitory G1 delay. The polypeptide is Cyclin-dependent kinase inhibitor CIP1 (Saccharomyces cerevisiae (strain ATCC 204508 / S288c) (Baker's yeast)).